A 223-amino-acid polypeptide reads, in one-letter code: RNA-free ribonuclease P (223 aa).

The protein belongs to the HARP family.

It catalyses the reaction Endonucleolytic cleavage of RNA, removing 5'-extranucleotides from tRNA precursor.. In terms of biological role, RNA-free RNase P that catalyzes the removal of the 5'-leader sequence from pre-tRNA to produce the mature 5'-terminus. This chain is RNA-free ribonuclease P, found in Methanococcus maripaludis (strain C6 / ATCC BAA-1332).